A 78-amino-acid polypeptide reads, in one-letter code: Large ribosomal subunit protein bL28 (78 aa).

This sequence belongs to the bacterial ribosomal protein bL28 family.

The chain is Large ribosomal subunit protein bL28 from Pectobacterium carotovorum subsp. carotovorum (strain PC1).